The sequence spans 313 residues: 4-diphosphocytidyl-2-C-methyl-D-erythritol kinase (313 aa).

Residue Lys29 is part of the active site. 113 to 123 contacts ATP; that stretch reads PMGGGVGGGSS. The active site involves Asp155.

It belongs to the GHMP kinase family. IspE subfamily.

It catalyses the reaction 4-CDP-2-C-methyl-D-erythritol + ATP = 4-CDP-2-C-methyl-D-erythritol 2-phosphate + ADP + H(+). Its pathway is isoprenoid biosynthesis; isopentenyl diphosphate biosynthesis via DXP pathway; isopentenyl diphosphate from 1-deoxy-D-xylulose 5-phosphate: step 3/6. Catalyzes the phosphorylation of the position 2 hydroxy group of 4-diphosphocytidyl-2C-methyl-D-erythritol. This chain is 4-diphosphocytidyl-2-C-methyl-D-erythritol kinase, found in Haemophilus influenzae (strain ATCC 51907 / DSM 11121 / KW20 / Rd).